The chain runs to 405 residues: MFEGYPVDTANTAGDQAVTNYTINFGPQHPAAHGVLRMVMELDGEIIERVDPHVGLLHRGTEKLIEYKTYLQALPYFDRLDYCSPLGMEHSYVLAIEKLLDLEVPARAQYLRTMFAELTRICNHMLNIGSHVMDVGAMTPNLWVFELREDCLNFFERASGARMHSAYFRPGGVHQDVPEKLLVDIGEWVETRLPKLFGDAMSLVIDNRIFKQRNVDIATVSKEDALAWGFSGPMIRGSGIAWDLRKSQPYDAYAAMEFDIPVGTRGDCYDRFMVRVEEVYQSAKIIKQCLRDMPTGPIASLDRKVVPPKRGEMKQSMESLIHHFKLYTEGFHVPAGEVYVATESPKGEFGVYLVSDGTNKPYRCKIRPTAFSHLQAMDMMSKGHMLADTTAIIGAIDVVFGECDR.

The protein belongs to the complex I 49 kDa subunit family. NDH-1 is composed of 14 different subunits. Subunits NuoB, C, D, E, F, and G constitute the peripheral sector of the complex.

Its subcellular location is the cell inner membrane. The enzyme catalyses a quinone + NADH + 5 H(+)(in) = a quinol + NAD(+) + 4 H(+)(out). Its function is as follows. NDH-1 shuttles electrons from NADH, via FMN and iron-sulfur (Fe-S) centers, to quinones in the respiratory chain. The immediate electron acceptor for the enzyme in this species is believed to be ubiquinone. Couples the redox reaction to proton translocation (for every two electrons transferred, four hydrogen ions are translocated across the cytoplasmic membrane), and thus conserves the redox energy in a proton gradient. This Sphingopyxis alaskensis (strain DSM 13593 / LMG 18877 / RB2256) (Sphingomonas alaskensis) protein is NADH-quinone oxidoreductase subunit D.